The sequence spans 61 residues: MGNAGPLKLHTITKPGTIPYPPHGSQEFPSGTLSLSEVLTVPSALVTTLSFFLKCAIWPCS.

Residues 1–25 (MGNAGPLKLHTITKPGTIPYPPHGS) are disordered.

In Homo sapiens (Human), this protein is Early E3 6.4 kDa protein.